The primary structure comprises 883 residues: MTNMAGTATTEFRWKSPPQPPSQEQPISDSDSDSGSDSENHQHRHNDLSNSIFEAYLDCHSSSSPSSIDLAKIQSFLASSSSGAVSCLICLERIKRTDPTWSCTSSCFAVFHLFCIQSWARQCLDLQAARAVTRPSSNPTEPEAVWNCPKCRSSYQKSKIPRRYLCYCGKEEDPPADNPWILPHSCGEVCERPLSNNCGHCCLLLCHPGPCASCPKLVKAKCFCGGVEDVRRCGHKQFSCGDVCERVLDCNIHNCREICHDGECPPCRERAVYKCSCGKVKEEKDCCERVFRCEASCENMLNCGKHVCERGCHAGECGLCPYQGKRSCPCGKRFYQGLSCDVVAPLCGGTCDKVLGCGYHRCPERCHRGPCLETCRIVVTKSCRCGVTKKQVPCHQELACERKCQRVRDCARHACRRRCCDGECPPCSEICGKKLRCRNHKCQSPCHQGPCAPCPIMVTISCACGETHFEVPCGTETNQKPPRCRKLCHITPLCRHGQNQKPHKCHYGACPPCRLLCDEEYPCGHKCKLRCHGPRPPPNREFILKPTKKMLHIQAESTPGSPCPRCPEPVWRPCVGHHLAAEKRMICSDRTQFACDNLCGNPLPCGNHYCSYFCHALDIRSSSLDKRSESCEKCDLRCQKERTPRCQHPCPRRCHPEDCPPCKTLVKRSCHCGAMVHAFECIYYNTMSEKDQMKARSCRGPCHRKLPNCTHLCPEICHPGQCPLPEKCGKKVVVRCKCLTLKKEWVCQDVQAAHRATGSDPKEVPKNQFGVGLLPCDSNCKSKLQVAESVLTQRNVKEIEEKEEPSGKNASKRRKRRGRGQDIQETTRLQKLAVTTKRILMVVMLVAMLAAVSYYGYKGLLWLSDWMNEVEEQRQKSRRYPRI.

Residues 1 to 10 (MTNMAGTATT) show a composition bias toward polar residues. Positions 1 to 44 (MTNMAGTATTEFRWKSPPQPPSQEQPISDSDSDSGSDSENHQHR) are disordered. The segment at 87–152 (CLICLERIKR…EAVWNCPKCR (66 aa)) adopts an RING-type; degenerate zinc-finger fold. 11 consecutive NF-X1-type zinc fingers follow at residues 198–216 (CGHCCLLLCHPGPCASCPK), 250–269 (CNIHNCREICHDGECPPCRE), 303–322 (CGKHVCERGCHAGECGLCPY), 357–377 (CGYHRCPERCHRGPCLETCRI), 410–429 (CARHACRRRCCDGECPPCSE), 437–456 (CRNHKCQSPCHQGPCAPCPI), 494–515 (CRHGQNQKPHKCHYGACPPCRL), 523–568 (CGHK…RCPE), 605–636 (CGNHYCSYFCHALDIRSSSLDKRSESCEKCDL), 646–664 (CQHPCPRRCHPEDCPPCKT), and 709–738 (CTHLCPEICHPGQCPLPEKCGKKVVVRCKC). The interval 798 to 824 (EIEEKEEPSGKNASKRRKRRGRGQDIQ) is disordered. Residues 841–863 (MVVMLVAMLAAVSYYGYKGLLWL) form a helical membrane-spanning segment.

This sequence belongs to the NFX1 family. Interacts with ADO1/ZTL. Constitutively expressed in mesophyll and guard cells.

Its subcellular location is the nucleus. The protein localises to the membrane. It functions in the pathway protein modification; protein ubiquitination. Functionally, probable transcriptional regulator. May mediate E2- or E3-dependent ubiquitination. Required to gate light sensitivity during the night. Regulates the speed of the clock by acting in the feedback loop between CCA1, LHY and APRR1/TOC1. Promotes the expression of CCA1 at night but not by days. This activational effect is enhanced by interaction with ADO1/ZTL. Association with ADO1/ZTL is not leading to the degradation of NFXL2. Confers sensitivity to osmotic stress such as high salinity. Prevents H(2)O(2) production and abscisic acid accumulation. Part of a regulatory network that integrates the biosynthesis and action of abscisic acid, reactive oxygen species and cuticle components. This Arabidopsis thaliana (Mouse-ear cress) protein is NF-X1-type zinc finger protein NFXL2 (NFXL2).